The chain runs to 323 residues: tRNA-cytidine(32) 2-sulfurtransferase (323 aa).

The short motif at 49–54 (SGGKDS) is the PP-loop motif element. Residues cysteine 124, cysteine 127, and cysteine 215 each coordinate [4Fe-4S] cluster.

The protein belongs to the TtcA family. Homodimer. Requires Mg(2+) as cofactor. The cofactor is [4Fe-4S] cluster.

The protein localises to the cytoplasm. It carries out the reaction cytidine(32) in tRNA + S-sulfanyl-L-cysteinyl-[cysteine desulfurase] + AH2 + ATP = 2-thiocytidine(32) in tRNA + L-cysteinyl-[cysteine desulfurase] + A + AMP + diphosphate + H(+). The protein operates within tRNA modification. Its function is as follows. Catalyzes the ATP-dependent 2-thiolation of cytidine in position 32 of tRNA, to form 2-thiocytidine (s(2)C32). The sulfur atoms are provided by the cysteine/cysteine desulfurase (IscS) system. In Shewanella denitrificans (strain OS217 / ATCC BAA-1090 / DSM 15013), this protein is tRNA-cytidine(32) 2-sulfurtransferase.